The primary structure comprises 358 residues: Stearoyl-CoA desaturase 2 (358 aa).

The Cytoplasmic portion of the chain corresponds to 1–71 (MPAHILQEIS…EGPPPKLEYV (71 aa)). Positions 16-39 (TTTITAPPSGGQQNGGEKFEKSSH) are disordered. A helical membrane pass occupies residues 72 to 92 (WRNIILMALLHLGALYGITLV). Asn-74 contacts substrate. Over 93-96 (PSCK) the chain is Lumenal. The helical transmembrane segment at 97 to 117 (LYTCLFAYLYYVISALGITAG) threads the bilayer. Over 118 to 216 (AHRLWSHRTY…EKLVMFQRRY (99 aa)) the chain is Cytoplasmic. Fe cation contacts are provided by His-119 and His-124. The Histidine box-1 motif lies at 119 to 124 (HRLWSH). Asn-147, Arg-154, and Asp-155 together coordinate substrate. Fe cation is bound by residues His-156, His-159, and His-160. Residues 156 to 160 (HRAHH) carry the Histidine box-2 motif. The substrate site is built by Arg-187 and Lys-188. A helical membrane pass occupies residues 217 to 236 (YKPGLLLMCFVLPTLVPWYC). The Lumenal portion of the chain corresponds to 237-240 (WGET). The chain crosses the membrane as a helical span at residues 241–262 (FVNSLCVSTFLRYAVVLNATWL). Substrate is bound at residue Trp-261. Residues 263 to 358 (VNSAAHLYGY…RTGDGSCKSG (96 aa)) lie on the Cytoplasmic side of the membrane. Fe cation is bound by residues His-268, His-297, His-300, and His-301. Residues 297-301 (HNYHH) carry the Histidine box-3 motif.

This sequence belongs to the fatty acid desaturase type 1 family. The cofactor is Fe(2+). Detected in brain and skin. Highly expressed in brain, and detected at low levels in heart, stomach, lung and testis. Detected both in dermis and epidermis.

It localises to the endoplasmic reticulum membrane. It is found in the microsome membrane. The catalysed reaction is octadecanoyl-CoA + 2 Fe(II)-[cytochrome b5] + O2 + 2 H(+) = (9Z)-octadecenoyl-CoA + 2 Fe(III)-[cytochrome b5] + 2 H2O. The enzyme catalyses hexadecanoyl-CoA + 2 Fe(II)-[cytochrome b5] + O2 + 2 H(+) = (9Z)-hexadecenoyl-CoA + 2 Fe(III)-[cytochrome b5] + 2 H2O. Functionally, stearoyl-CoA desaturase that utilizes O(2) and electrons from reduced cytochrome b5 to introduce the first double bond into saturated fatty acyl-CoA substrates. Catalyzes the insertion of a cis double bond at the delta-9 position into fatty acyl-CoA substrates including palmitoyl-CoA and stearoyl-CoA. Gives rise to a mixture of 16:1 and 18:1 unsaturated fatty acids. Contributes to the biosynthesis of membrane phospholipids, cholesterol esters and triglycerides, especially during embryonic development and in neonates. Important for normal permeability barrier function of the skin in neonates. This is Stearoyl-CoA desaturase 2 (Scd2) from Mus musculus (Mouse).